We begin with the raw amino-acid sequence, 142 residues long: Peptide methionine sulfoxide reductase MsrB (142 aa).

The 124-residue stretch at 2–125 (LKKDKSELTD…NSAAIQFIPY (124 aa)) folds into the MsrB domain. The active-site Nucleophile is cysteine 114.

Belongs to the MsrB Met sulfoxide reductase family.

It catalyses the reaction L-methionyl-[protein] + [thioredoxin]-disulfide + H2O = L-methionyl-(R)-S-oxide-[protein] + [thioredoxin]-dithiol. The polypeptide is Peptide methionine sulfoxide reductase MsrB (Staphylococcus aureus (strain Mu3 / ATCC 700698)).